Here is a 159-residue protein sequence, read N- to C-terminus: Cyclic pyranopterin monophosphate synthase (159 aa).

Residues 75–77 (LCH) and 113–114 (ME) contribute to the substrate site. Asp128 is a catalytic residue.

The protein belongs to the MoaC family. As to quaternary structure, homohexamer; trimer of dimers.

The catalysed reaction is (8S)-3',8-cyclo-7,8-dihydroguanosine 5'-triphosphate = cyclic pyranopterin phosphate + diphosphate. The protein operates within cofactor biosynthesis; molybdopterin biosynthesis. Catalyzes the conversion of (8S)-3',8-cyclo-7,8-dihydroguanosine 5'-triphosphate to cyclic pyranopterin monophosphate (cPMP). This Cupriavidus necator (strain ATCC 17699 / DSM 428 / KCTC 22496 / NCIMB 10442 / H16 / Stanier 337) (Ralstonia eutropha) protein is Cyclic pyranopterin monophosphate synthase.